Consider the following 238-residue polypeptide: Ribonuclease PH (238 aa).

Phosphate is bound by residues Arg86 and 124–126 (GTR).

It belongs to the RNase PH family. Homohexameric ring arranged as a trimer of dimers.

The catalysed reaction is tRNA(n+1) + phosphate = tRNA(n) + a ribonucleoside 5'-diphosphate. In terms of biological role, phosphorolytic 3'-5' exoribonuclease that plays an important role in tRNA 3'-end maturation. Removes nucleotide residues following the 3'-CCA terminus of tRNAs; can also add nucleotides to the ends of RNA molecules by using nucleoside diphosphates as substrates, but this may not be physiologically important. Probably plays a role in initiation of 16S rRNA degradation (leading to ribosome degradation) during starvation. This chain is Ribonuclease PH, found in Haemophilus influenzae (strain 86-028NP).